The sequence spans 280 residues: UPF0276 protein NMB2142 (280 aa).

The protein belongs to the UPF0276 family.

This is UPF0276 protein NMB2142 from Neisseria meningitidis serogroup B (strain ATCC BAA-335 / MC58).